A 227-amino-acid polypeptide reads, in one-letter code: Ribosomal RNA large subunit methyltransferase E (227 aa).

S-adenosyl-L-methionine-binding residues include Gly78, Trp80, Asp103, Asp119, and Asp143. Lys183 acts as the Proton acceptor in catalysis.

This sequence belongs to the class I-like SAM-binding methyltransferase superfamily. RNA methyltransferase RlmE family.

It localises to the cytoplasm. The enzyme catalyses uridine(2552) in 23S rRNA + S-adenosyl-L-methionine = 2'-O-methyluridine(2552) in 23S rRNA + S-adenosyl-L-homocysteine + H(+). Specifically methylates the uridine in position 2552 of 23S rRNA at the 2'-O position of the ribose in the fully assembled 50S ribosomal subunit. This chain is Ribosomal RNA large subunit methyltransferase E, found in Rickettsia typhi (strain ATCC VR-144 / Wilmington).